The following is a 393-amino-acid chain: NAD(P)H-quinone oxidoreductase subunit H, chloroplastic (393 aa).

Belongs to the complex I 49 kDa subunit family. In terms of assembly, NDH is composed of at least 16 different subunits, 5 of which are encoded in the nucleus.

The protein resides in the plastid. The protein localises to the chloroplast thylakoid membrane. It catalyses the reaction a plastoquinone + NADH + (n+1) H(+)(in) = a plastoquinol + NAD(+) + n H(+)(out). The enzyme catalyses a plastoquinone + NADPH + (n+1) H(+)(in) = a plastoquinol + NADP(+) + n H(+)(out). In terms of biological role, NDH shuttles electrons from NAD(P)H:plastoquinone, via FMN and iron-sulfur (Fe-S) centers, to quinones in the photosynthetic chain and possibly in a chloroplast respiratory chain. The immediate electron acceptor for the enzyme in this species is believed to be plastoquinone. Couples the redox reaction to proton translocation, and thus conserves the redox energy in a proton gradient. This is NAD(P)H-quinone oxidoreductase subunit H, chloroplastic from Gossypium hirsutum (Upland cotton).